Here is a 99-residue protein sequence, read N- to C-terminus: Aspartyl/glutamyl-tRNA(Asn/Gln) amidotransferase subunit C (99 aa).

It belongs to the GatC family. Heterotrimer of A, B and C subunits.

The enzyme catalyses L-glutamyl-tRNA(Gln) + L-glutamine + ATP + H2O = L-glutaminyl-tRNA(Gln) + L-glutamate + ADP + phosphate + H(+). It catalyses the reaction L-aspartyl-tRNA(Asn) + L-glutamine + ATP + H2O = L-asparaginyl-tRNA(Asn) + L-glutamate + ADP + phosphate + 2 H(+). In terms of biological role, allows the formation of correctly charged Asn-tRNA(Asn) or Gln-tRNA(Gln) through the transamidation of misacylated Asp-tRNA(Asn) or Glu-tRNA(Gln) in organisms which lack either or both of asparaginyl-tRNA or glutaminyl-tRNA synthetases. The reaction takes place in the presence of glutamine and ATP through an activated phospho-Asp-tRNA(Asn) or phospho-Glu-tRNA(Gln). The protein is Aspartyl/glutamyl-tRNA(Asn/Gln) amidotransferase subunit C of Orientia tsutsugamushi (strain Ikeda) (Rickettsia tsutsugamushi).